A 142-amino-acid chain; its full sequence is Large ribosomal subunit protein uL13 (142 aa).

This sequence belongs to the universal ribosomal protein uL13 family. As to quaternary structure, part of the 50S ribosomal subunit.

This protein is one of the early assembly proteins of the 50S ribosomal subunit, although it is not seen to bind rRNA by itself. It is important during the early stages of 50S assembly. This Polynucleobacter asymbioticus (strain DSM 18221 / CIP 109841 / QLW-P1DMWA-1) (Polynucleobacter necessarius subsp. asymbioticus) protein is Large ribosomal subunit protein uL13.